A 212-amino-acid polypeptide reads, in one-letter code: Large ribosomal subunit protein uL4 (212 aa).

A disordered region spans residues 45-71; that stretch reads RQGNASTKTRAEVRGGGRKPWRQKGTG. A compositionally biased stretch (basic residues) spans 60–71; the sequence is GGRKPWRQKGTG.

The protein belongs to the universal ribosomal protein uL4 family. In terms of assembly, part of the 50S ribosomal subunit.

Its function is as follows. One of the primary rRNA binding proteins, this protein initially binds near the 5'-end of the 23S rRNA. It is important during the early stages of 50S assembly. It makes multiple contacts with different domains of the 23S rRNA in the assembled 50S subunit and ribosome. Functionally, forms part of the polypeptide exit tunnel. The polypeptide is Large ribosomal subunit protein uL4 (Nostoc punctiforme (strain ATCC 29133 / PCC 73102)).